The sequence spans 503 residues: Cobyric acid synthase (503 aa).

One can recognise a GATase cobBQ-type domain in the interval 255 to 444 (AIDVAVIRCP…MHDLFHNDAF (190 aa)). The active-site Nucleophile is cysteine 337. Histidine 436 is an active-site residue.

The protein belongs to the CobB/CobQ family. CobQ subfamily.

It participates in cofactor biosynthesis; adenosylcobalamin biosynthesis. Functionally, catalyzes amidations at positions B, D, E, and G on adenosylcobyrinic A,C-diamide. NH(2) groups are provided by glutamine, and one molecule of ATP is hydrogenolyzed for each amidation. The protein is Cobyric acid synthase of Geobacillus kaustophilus (strain HTA426).